The following is a 286-amino-acid chain: Nucleotide-binding protein PSPA7_5038 (286 aa).

8–15 (GRSGSGKS) lines the ATP pocket. Residue 60-63 (DARN) coordinates GTP.

The protein belongs to the RapZ-like family.

In terms of biological role, displays ATPase and GTPase activities. The sequence is that of Nucleotide-binding protein PSPA7_5038 from Pseudomonas paraeruginosa (strain DSM 24068 / PA7) (Pseudomonas aeruginosa (strain PA7)).